Consider the following 887-residue polypeptide: PAN2-PAN3 deadenylation complex subunit Pan3 (887 aa).

A C3H1-type zinc finger spans residues 49–77 (GVKLKYCRYYAKDKTCFYGEECQFLHEDP). 3 disordered regions span residues 111-139 (GGGA…GLDG), 280-307 (ENNL…SNVS), and 321-393 (PSMG…GQVI). The tract at residues 147–498 (MDGGALTDAS…PPPNRIQKSS (352 aa)) is necessary and sufficient for interaction with PABPC1 but not needed for interaction with PAN2. Composition is skewed to polar residues over residues 281–290 (NNLQTPNPTA) and 298–307 (GSTSRLSNVS). Residues 284-299 (QTPNPTASEFIPKGGS) carry the PABPC-interacting motif-2 (PAM-2) motif. A phosphoserine mark is found at Ser-354 and Ser-361. Residues 463–750 (QIDQADMPAV…SVNDIMPMIG (288 aa)) are pseudokinase domain. ATP is bound by residues Arg-521, 570–577 (DFHAGGET), and 644–645 (TK). The knob domain stretch occupies residues 789-887 (TINERPEFQK…ELIAAANGQL (99 aa)).

Belongs to the protein kinase superfamily. PAN3 family. Homodimer. Forms a heterotrimer with a catalytic subunit PAN2 to form the poly(A)-nuclease (PAN) deadenylation complex. Interacts (via PAM-2 motif) with poly(A)-binding protein PABPC1 (via PABC domain), conferring substrate specificity of the enzyme complex. Interacts with the GW182 family proteins TNRC6A, TNRC6B and TNRC6C. Interacts with YTHDF3. As to quaternary structure, interacts with PAN2. Interacts (via N-terminus) with PABPC1 at lower efficiency than isoform 3. In terms of assembly, interacts with PAN2. Interacts (via N-terminus) with PABPC1 at higher efficiency than isoform 1.

The protein resides in the cytoplasm. The protein localises to the P-body. Its subcellular location is the nucleus. In terms of biological role, regulatory subunit of the poly(A)-nuclease (PAN) deadenylation complex, one of two cytoplasmic mRNA deadenylases involved in general and miRNA-mediated mRNA turnover. PAN specifically shortens poly(A) tails of RNA and the activity is stimulated by poly(A)-binding protein (PABP). PAN deadenylation is followed by rapid degradation of the shortened mRNA tails by the CCR4-NOT complex. Deadenylated mRNAs are then degraded by two alternative mechanisms, namely exosome-mediated 3'-5' exonucleolytic degradation, or deadenylation-dependent mRNA decapping and subsequent 5'-3' exonucleolytic degradation by XRN1. PAN3 acts as a regulator for PAN activity, recruiting the catalytic subunit PAN2 to mRNA via its interaction with RNA and PABP, and to miRNA targets via its interaction with GW182 family proteins. Decreases PAN2-mediated deadenylation, possibly by preventing progression into the second CCR4-NOT mediated stage of biphasic deadenylation. Has a significant effect on mRNA stability, generally stabilizing a subset of the transcriptome. Stabilizes mRNAs degraded by the AU-rich element (ARE)-mediated mRNA decay pathway but promotes degradation of mRNAs by the microRNA-mediated pathway. Its activity influences mRNP remodeling, specifically reducing formation of a subset of P-bodies containing GW220, an isoform of TNRC6A. Functionally, enhances PAN2 deadenylase activity and has an extensive effect on mRNA stability, generally enhancing mRNA decay across the transcriptome by multiple pathways, including the AU-rich element (ARE)-mediated pathway, microRNA-mediated pathway and the nonsense-mediated pathway (NMD). Its activity is required for efficient P-body formation. May be involved in regulating mRNAs of genes involved in cell cycle progression and cell proliferation. This is PAN2-PAN3 deadenylation complex subunit Pan3 from Mus musculus (Mouse).